A 257-amino-acid chain; its full sequence is Chymotrypsin-like elastase family member 3B (257 aa).

A signal peptide (or 3) is located at residues 1-2 (VA). Positions 3–15 (SGYGPPSSHPSSR) are cleaved as a propeptide — activation peptide. One can recognise a Peptidase S1 domain in the interval 16–255 (VVNGEDAVPY…FIDWIEETIA (240 aa)). An N-linked (GlcNAc...) asparagine glycan is attached at Asn38. 2 disulfides stabilise this stretch: Cys45–Cys61 and Cys104–Cys107. The active-site Charge relay system is the His60. The active-site Charge relay system is Asp110. 3 disulfides stabilise this stretch: Cys144–Cys210, Cys175–Cys191, and Cys200–Cys231. The Charge relay system role is filled by Ser204.

The protein belongs to the peptidase S1 family. Elastase subfamily.

The enzyme catalyses Preferential cleavage: Ala-|-Xaa. Does not hydrolyze elastin.. Its function is as follows. Efficient protease with alanine specificity but only little elastolytic activity. The sequence is that of Chymotrypsin-like elastase family member 3B (CELA3B) from Macaca mulatta (Rhesus macaque).